The chain runs to 102 residues: Gonadotropin subunit beta-1 (102 aa).

Cystine bridges form between C8–C51, C20–C65, C31–C77, C35–C79, and C82–C89. N12 is a glycosylation site (N-linked (GlcNAc...) asparagine).

This sequence belongs to the glycoprotein hormones subunit beta family. In terms of assembly, heterodimer of an alpha and a beta chain.

It localises to the secreted. In terms of biological role, involved in gametogenesis and steroidogenesis. The chain is Gonadotropin subunit beta-1 (cgba) from Thunnus obesus (Bigeye tuna).